Here is a 902-residue protein sequence, read N- to C-terminus: DNA mismatch repair protein MutS (902 aa).

654-661 (GPNMGGKS) contributes to the ATP binding site.

The protein belongs to the DNA mismatch repair MutS family.

This protein is involved in the repair of mismatches in DNA. It is possible that it carries out the mismatch recognition step. This protein has a weak ATPase activity. This chain is DNA mismatch repair protein MutS, found in Xanthomonas axonopodis pv. citri (strain 306).